We begin with the raw amino-acid sequence, 99 residues long: Gibberellin-regulated protein 2 (99 aa).

The first 26 residues, 1–26, serve as a signal peptide directing secretion; sequence MAVFRSTLVLLLIIVCLTTYELHVHA.

The protein belongs to the GASA family. Six disulfide bonds may be present. In terms of tissue distribution, dry seeds and maturating siliques.

It is found in the secreted. Functionally, gibberellin-regulated protein that may function in hormonal controlled steps of development such as seed germination, flowering and seed maturation. This Arabidopsis thaliana (Mouse-ear cress) protein is Gibberellin-regulated protein 2 (GASA2).